The following is a 360-amino-acid chain: Glycoprotein-N-acetylgalactosamine 3-beta-galactosyltransferase 1 (360 aa).

At 1–7 the chain is on the cytoplasmic side; it reads MSIICAK. A helical; Signal-anchor for type II membrane protein transmembrane segment spans residues 8 to 28; that stretch reads VAWLPLTLGTAMGFLITFYLA. Residues 29–360 are Lumenal-facing; sequence RTLLERNSQP…SDFLEPPMES (332 aa). A disulfide bridge links cysteine 79 with cysteine 103. UDP is bound by residues methionine 82, glutamate 126, glycine 127, arginine 128, and lysine 134. N-linked (GlcNAc...) asparagine glycosylation occurs at asparagine 148. A UDP-binding site is contributed by aspartate 157. Mn(2+) contacts are provided by aspartate 157 and aspartate 159. Asparagine 173 carries N-linked (GlcNAc...) asparagine glycosylation. Cysteine 220 and cysteine 234 form a disulfide bridge. Tryptophan 274 provides a ligand contact to a glycoprotein. A disulfide bridge connects residues cysteine 289 and cysteine 290. 2 residues coordinate UDP: histidine 298 and tyrosine 299. Histidine 298 is a binding site for Mn(2+). Residues asparagine 341 and asparagine 347 are each glycosylated (N-linked (GlcNAc...) asparagine).

This sequence belongs to the glycosyltransferase 31 family. Beta3-Gal-T subfamily. In terms of assembly, homodimer; disulfide-linked. Requires Mn(2+) as cofactor.

It is found in the membrane. The enzyme catalyses an N-acetyl-alpha-D-galactosaminyl derivative + UDP-alpha-D-galactose = a beta-D-galactosyl-(1-&gt;3)-N-acetyl-alpha-D-galactosaminyl derivative + UDP + H(+). The protein operates within protein modification; protein glycosylation. Its function is as follows. Glycosyltransferase that generates the core 1 O-glycan Gal-beta1-3GalNAc-alpha1-Ser/Thr (T antigen), which is a precursor for many extended O-glycans in glycoproteins. In Xenopus laevis (African clawed frog), this protein is Glycoprotein-N-acetylgalactosamine 3-beta-galactosyltransferase 1 (c1galt1).